The sequence spans 368 residues: 4-hydroxy-3-methylbut-2-en-1-yl diphosphate synthase (flavodoxin) (368 aa).

[4Fe-4S] cluster is bound by residues C271, C274, C306, and E313.

It belongs to the IspG family. It depends on [4Fe-4S] cluster as a cofactor.

The enzyme catalyses (2E)-4-hydroxy-3-methylbut-2-enyl diphosphate + oxidized [flavodoxin] + H2O + 2 H(+) = 2-C-methyl-D-erythritol 2,4-cyclic diphosphate + reduced [flavodoxin]. It participates in isoprenoid biosynthesis; isopentenyl diphosphate biosynthesis via DXP pathway; isopentenyl diphosphate from 1-deoxy-D-xylulose 5-phosphate: step 5/6. Its function is as follows. Converts 2C-methyl-D-erythritol 2,4-cyclodiphosphate (ME-2,4cPP) into 1-hydroxy-2-methyl-2-(E)-butenyl 4-diphosphate. This chain is 4-hydroxy-3-methylbut-2-en-1-yl diphosphate synthase (flavodoxin), found in Haemophilus influenzae (strain 86-028NP).